Consider the following 259-residue polypeptide: Expansin-B6 (259 aa).

Residues 1 to 24 (MASSSHRYFALLALFAVSLKFCYC) form the signal peptide. N-linked (GlcNAc...) asparagine glycosylation occurs at Asn-26. One can recognise an Expansin-like EG45 domain in the interval 52–160 (GGACGFAVAN…IRVECLYRRT (109 aa)). 3 disulfide bridges follow: Cys-55/Cys-82, Cys-85/Cys-155, and Cys-90/Cys-96. The 82-residue stretch at 173 to 254 (YYISFVVEYE…NWKPNETYRS (82 aa)) folds into the Expansin-like CBD domain. Asn-249 is a glycosylation site (N-linked (GlcNAc...) asparagine).

It belongs to the expansin family. Expansin B subfamily.

The protein resides in the secreted. It is found in the cell wall. Its subcellular location is the membrane. In terms of biological role, may cause loosening and extension of plant cell walls by disrupting non-covalent bonding between cellulose microfibrils and matrix glucans. The protein is Expansin-B6 of Arabidopsis thaliana (Mouse-ear cress).